The primary structure comprises 328 residues: dTDP-4-dehydrorhamnose 3,5-epimerase (328 aa).

Residues R23, E28, 46 to 48 (QEN), and R58 each bind substrate. The active-site Proton acceptor is H61. K70 and H117 together coordinate substrate. Residue Y130 is the Proton donor of the active site. Residues E141 and K166 each coordinate substrate.

It belongs to the dTDP-4-dehydrorhamnose 3,5-epimerase family. In terms of assembly, homodimer.

The enzyme catalyses dTDP-4-dehydro-6-deoxy-alpha-D-glucose = dTDP-4-dehydro-beta-L-rhamnose. The protein operates within carbohydrate biosynthesis; dTDP-L-rhamnose biosynthesis. It functions in the pathway bacterial outer membrane biogenesis; LPS O-antigen biosynthesis. Functionally, catalyzes the epimerization of the C3' and C5'positions of dTDP-6-deoxy-D-xylo-4-hexulose, forming dTDP-6-deoxy-L-lyxo-4-hexulose. The chain is dTDP-4-dehydrorhamnose 3,5-epimerase (rfbC) from Neisseria gonorrhoeae.